The sequence spans 122 residues: Small ribosomal subunit protein uS13 (122 aa).

Residues 97–122 form a disordered region; the sequence is PVRGQKTKSNARTRKGPRPSRIKKKK. A compositionally biased stretch (basic residues) spans 101–122; it reads QKTKSNARTRKGPRPSRIKKKK.

It belongs to the universal ribosomal protein uS13 family. In terms of assembly, part of the 30S ribosomal subunit. Forms a loose heterodimer with protein S19. Forms two bridges to the 50S subunit in the 70S ribosome.

Located at the top of the head of the 30S subunit, it contacts several helices of the 16S rRNA. In the 70S ribosome it contacts the 23S rRNA (bridge B1a) and protein L5 of the 50S subunit (bridge B1b), connecting the 2 subunits; these bridges are implicated in subunit movement. Contacts the tRNAs in the A and P-sites. The chain is Small ribosomal subunit protein uS13 from Thermosipho melanesiensis (strain DSM 12029 / CIP 104789 / BI429).